The primary structure comprises 345 residues: L-threonine 3-dehydrogenase (345 aa).

C42 contacts Zn(2+). Catalysis depends on charge relay system residues T44 and H47. 6 residues coordinate Zn(2+): H67, E68, C97, C100, C103, and C111. Residues I179, D199, R204, 266–268 (LGI), and 290–291 (IY) each bind NAD(+).

This sequence belongs to the zinc-containing alcohol dehydrogenase family. In terms of assembly, homotetramer. Zn(2+) serves as cofactor.

The protein localises to the cytoplasm. It catalyses the reaction L-threonine + NAD(+) = (2S)-2-amino-3-oxobutanoate + NADH + H(+). The protein operates within amino-acid degradation; L-threonine degradation via oxydo-reductase pathway; glycine from L-threonine: step 1/2. Its function is as follows. Catalyzes the NAD(+)-dependent oxidation of L-threonine to 2-amino-3-ketobutyrate. The polypeptide is L-threonine 3-dehydrogenase (Rhizobium etli (strain ATCC 51251 / DSM 11541 / JCM 21823 / NBRC 15573 / CFN 42)).